A 208-amino-acid polypeptide reads, in one-letter code: Outer-membrane lipoprotein carrier protein (208 aa).

Residues 1–22 (MKKIFAIAALSLPLFSHFPAFA) form the signal peptide.

It belongs to the LolA family. Monomer.

Its subcellular location is the periplasm. Participates in the translocation of lipoproteins from the inner membrane to the outer membrane. Only forms a complex with a lipoprotein if the residue after the N-terminal Cys is not an aspartate (The Asp acts as a targeting signal to indicate that the lipoprotein should stay in the inner membrane). This is Outer-membrane lipoprotein carrier protein from Shewanella halifaxensis (strain HAW-EB4).